We begin with the raw amino-acid sequence, 937 residues long: MSDYKTTLNLPETGFPMRGDLAKREPDMLKRWYEQDLYGIIRNAKKGKKTFILHDGPPYANGSIHIGHSVNKILKDIIVKSKGLSGYDSPYVPGWDCHGLPIELKVEQLIGKPGEKVSAAEFRAECRKYAAEQVAGQKADFIRLGVLGDWDRPYLTMDFKTEANIIRALGRIIENGHLHKGAKPVHWCADCGSALAEAEVEYYDKTSPSIDVTFNASDVAAVLAKFGVSRVDGPISLVIWTTTPWTLPANRAISLNAEFDYQLVQIDGQALILAADLVESVMKRVGVTQWIVLGDCKGADLELLRFKHPFLGFDVPAILGDHVTLDAGTGAVHTAGGHGPDDYVISQKYNLEIANPVGPNGCYLSGTYPELDGKFVFKANDLIVEILREKSMLLHVEKLQHSYPCCWRHKSPIIFRATPQWFVSMDQKGLRKQSLSEIKDVQWIPDWGQARIEAMVANRPDWCISRQRTWGVPMSLFVHKETEELHPRTAELIEAVAKRVEADGIQAWWDLDPADVLGADADNYVKVPDTLDVWFDSGSTHASVVDVRPEFGGHEADMYLEGSDQHRGWFMSSLMISTAIKGKAPYRQVLTHGFTVDGQGRKMSKSIGNTVSPQDVMNKLGADILRLWIGSTDYSGEIAVSDEILKRSADAYRRIRNTARFLLANLNGFDPQKDSVKPEDMVVLDRWAVGCAKAAQDEILEAYESYDFHRVVQRLMQFCSIEMGSFYLDIIKDRQYTAKGDSVARRSCQTALYHISEALVRWMAPIMSFTADELWNYLPGERAQYVFTEEWYDGLFALDASETMNDAFWADVLKVRSEVNKVIEQARNDKRIGGSLEASVTLYADANLADKLNQLRQELHFALLTSKARVERYENAPDSAQATELTGLKIALSEAEGHKCPRCWHYETDIGSNADHPEVCGRCATNVGGNGEERKFV.

The 'HIGH' region motif lies at 58 to 68 (PYANGSIHIGH). L-isoleucyl-5'-AMP is bound at residue E561. A 'KMSKS' region motif is present at residues 602-606 (KMSKS). Residue K605 coordinates ATP. 4 residues coordinate Zn(2+): C900, C903, C920, and C923.

This sequence belongs to the class-I aminoacyl-tRNA synthetase family. IleS type 1 subfamily. In terms of assembly, monomer. The cofactor is Zn(2+).

It localises to the cytoplasm. It carries out the reaction tRNA(Ile) + L-isoleucine + ATP = L-isoleucyl-tRNA(Ile) + AMP + diphosphate. Functionally, catalyzes the attachment of isoleucine to tRNA(Ile). As IleRS can inadvertently accommodate and process structurally similar amino acids such as valine, to avoid such errors it has two additional distinct tRNA(Ile)-dependent editing activities. One activity is designated as 'pretransfer' editing and involves the hydrolysis of activated Val-AMP. The other activity is designated 'posttransfer' editing and involves deacylation of mischarged Val-tRNA(Ile). In Pectobacterium atrosepticum (strain SCRI 1043 / ATCC BAA-672) (Erwinia carotovora subsp. atroseptica), this protein is Isoleucine--tRNA ligase.